The chain runs to 390 residues: Argininosuccinate synthase (390 aa).

An ATP-binding site is contributed by 6-14; that stretch reads AYSGGLDTT. Tyr84 is a binding site for L-citrulline. Gly114 is a binding site for ATP. L-aspartate is bound by residues Thr116, Asn120, and Asp121. Residue Asn120 participates in L-citrulline binding. Residues Arg124, Ser171, Ser180, Glu253, and Tyr265 each contribute to the L-citrulline site.

It belongs to the argininosuccinate synthase family. Type 1 subfamily. As to quaternary structure, homotetramer.

The protein resides in the cytoplasm. The catalysed reaction is L-citrulline + L-aspartate + ATP = 2-(N(omega)-L-arginino)succinate + AMP + diphosphate + H(+). It participates in amino-acid biosynthesis; L-arginine biosynthesis; L-arginine from L-ornithine and carbamoyl phosphate: step 2/3. This Sulfurisphaera tokodaii (strain DSM 16993 / JCM 10545 / NBRC 100140 / 7) (Sulfolobus tokodaii) protein is Argininosuccinate synthase.